Reading from the N-terminus, the 217-residue chain is Somatotropin (217 aa).

The N-terminal stretch at 1 to 26 (MATGSRTSLLLAFTLLCLPQLKEAGA) is a signal peptide. H44 lines the Zn(2+) pocket. An intrachain disulfide couples C79 to C191. A Phosphoserine modification is found at S132. E200 contributes to the Zn(2+) binding site. An intrachain disulfide couples C208 to C215.

It belongs to the somatotropin/prolactin family.

It is found in the secreted. In terms of biological role, plays an important role in growth control. Its major role in stimulating body growth is to stimulate the liver and other tissues to secrete IGF1. It stimulates both the differentiation and proliferation of myoblasts. It also stimulates amino acid uptake and protein synthesis in muscle and other tissues. This chain is Somatotropin (GH1), found in Saimiri boliviensis boliviensis (Bolivian squirrel monkey).